The sequence spans 405 residues: Cytochrome P450 130 (405 aa).

Residues Asp-93 and His-97 each contribute to the substrate site. The heme site is built by Arg-101, Gly-243, Arg-295, Tyr-318, Ser-348, His-352, and Cys-354.

The protein belongs to the cytochrome P450 family. As to quaternary structure, homodimer. Requires heme as cofactor.

The sequence is that of Cytochrome P450 130 (cyp130) from Mycobacterium tuberculosis (strain CDC 1551 / Oshkosh).